The primary structure comprises 385 residues: Protein hunchback (385 aa).

Disordered stretches follow at residues 1–94 (IGGI…YDAM) and 124–216 (ESRA…PGLR). The segment covering 63-77 (SASPSSSSKDSNGHS) has biased composition (low complexity). 2 stretches are compositionally biased toward basic and acidic residues: residues 126–135 (RASDARDHSP) and 173–203 (PERR…REGS). 4 C2H2-type zinc fingers span residues 229 to 251 (FKCK…SKEH), 258 to 280 (LCCR…MRNH), 286 to 308 (FQCS…LKSH), and 314 to 338 (YRCA…KYQH). Positions 361–385 (TRRGPKQKPLSKIFEQQTGTNNHSP) are disordered. Over residues 374–385 (FEQQTGTNNHSP) the composition is skewed to polar residues.

It belongs to the hunchback C2H2-type zinc-finger protein family.

Its subcellular location is the nucleus. Functionally, gap class segmentation protein that controls development of head structures. This is Protein hunchback (hb) from Bombyx mori (Silk moth).